Here is a 193-residue protein sequence, read N- to C-terminus: Chromophore lyase CpcS/CpeS 4 (193 aa).

The protein belongs to the CpcS/CpeS biliprotein lyase family.

Its function is as follows. Covalently attaches a chromophore to Cys residue(s) of phycobiliproteins. This chain is Chromophore lyase CpcS/CpeS 4, found in Trichodesmium erythraeum (strain IMS101).